Here is a 318-residue protein sequence, read N- to C-terminus: Thymidylate synthase (318 aa).

Residues R25 and 180 to 181 (RR) each bind dUMP. The Nucleophile role is filled by C200. Residues 220-223 (RSGD), N231, and 261-263 (HIY) contribute to the dUMP site. D223 contributes to the (6R)-5,10-methylene-5,6,7,8-tetrahydrofolate binding site. A317 is a (6R)-5,10-methylene-5,6,7,8-tetrahydrofolate binding site.

It belongs to the thymidylate synthase family. Bacterial-type ThyA subfamily. As to quaternary structure, homodimer.

Its subcellular location is the cytoplasm. The enzyme catalyses dUMP + (6R)-5,10-methylene-5,6,7,8-tetrahydrofolate = 7,8-dihydrofolate + dTMP. It functions in the pathway pyrimidine metabolism; dTTP biosynthesis. In terms of biological role, catalyzes the reductive methylation of 2'-deoxyuridine-5'-monophosphate (dUMP) to 2'-deoxythymidine-5'-monophosphate (dTMP) while utilizing 5,10-methylenetetrahydrofolate (mTHF) as the methyl donor and reductant in the reaction, yielding dihydrofolate (DHF) as a by-product. This enzymatic reaction provides an intracellular de novo source of dTMP, an essential precursor for DNA biosynthesis. The protein is Thymidylate synthase of Lactobacillus helveticus (strain DPC 4571).